The primary structure comprises 485 residues: GTPase Obg (485 aa).

One can recognise an Obg domain in the interval P2 to V159. Residues A160–R341 enclose the OBG-type G domain. GTP contacts are provided by residues G166 to S173, F191 to V195, D212 to G215, N292 to D295, and S322 to V324. Mg(2+) contacts are provided by S173 and T193. The OCT domain occupies P359–P437. The tract at residues T439–E485 is disordered. Residues T452–K468 show a composition bias toward basic and acidic residues.

It belongs to the TRAFAC class OBG-HflX-like GTPase superfamily. OBG GTPase family. In terms of assembly, monomer. Mg(2+) is required as a cofactor.

The protein localises to the cytoplasm. Its function is as follows. An essential GTPase which binds GTP, GDP and possibly (p)ppGpp with moderate affinity, with high nucleotide exchange rates and a fairly low GTP hydrolysis rate. Plays a role in control of the cell cycle, stress response, ribosome biogenesis and in those bacteria that undergo differentiation, in morphogenesis control. In Mycobacterium sp. (strain MCS), this protein is GTPase Obg.